A 742-amino-acid polypeptide reads, in one-letter code: Phosphoribosylformylglycinamidine synthase subunit PurL (742 aa).

H54 is an active-site residue. 2 residues coordinate ATP: Y57 and K96. E98 contributes to the Mg(2+) binding site. Substrate contacts are provided by residues S99–H102 and R121. H100 serves as the catalytic Proton acceptor. D122 is a binding site for Mg(2+). Residue Q245 coordinates substrate. A Mg(2+)-binding site is contributed by D273. E317–Q319 lines the substrate pocket. Positions 500 and 537 each coordinate ATP. Mg(2+) is bound at residue N538. S540 provides a ligand contact to substrate.

The protein belongs to the FGAMS family. As to quaternary structure, monomer. Part of the FGAM synthase complex composed of 1 PurL, 1 PurQ and 2 PurS subunits.

Its subcellular location is the cytoplasm. It catalyses the reaction N(2)-formyl-N(1)-(5-phospho-beta-D-ribosyl)glycinamide + L-glutamine + ATP + H2O = 2-formamido-N(1)-(5-O-phospho-beta-D-ribosyl)acetamidine + L-glutamate + ADP + phosphate + H(+). It participates in purine metabolism; IMP biosynthesis via de novo pathway; 5-amino-1-(5-phospho-D-ribosyl)imidazole from N(2)-formyl-N(1)-(5-phospho-D-ribosyl)glycinamide: step 1/2. Part of the phosphoribosylformylglycinamidine synthase complex involved in the purines biosynthetic pathway. Catalyzes the ATP-dependent conversion of formylglycinamide ribonucleotide (FGAR) and glutamine to yield formylglycinamidine ribonucleotide (FGAM) and glutamate. The FGAM synthase complex is composed of three subunits. PurQ produces an ammonia molecule by converting glutamine to glutamate. PurL transfers the ammonia molecule to FGAR to form FGAM in an ATP-dependent manner. PurS interacts with PurQ and PurL and is thought to assist in the transfer of the ammonia molecule from PurQ to PurL. This Oceanobacillus iheyensis (strain DSM 14371 / CIP 107618 / JCM 11309 / KCTC 3954 / HTE831) protein is Phosphoribosylformylglycinamidine synthase subunit PurL.